A 659-amino-acid polypeptide reads, in one-letter code: Centrosomal protein of 76 kDa (659 aa).

Residues serine 75 and serine 83 each carry the phosphoserine modification.

This sequence belongs to the CEP76 family. As to quaternary structure, interacts with CCP110 and CEP97.

The protein localises to the cytoplasm. The protein resides in the cytoskeleton. Its subcellular location is the microtubule organizing center. It localises to the centrosome. It is found in the centriole. Its function is as follows. Centrosomal protein involved in regulation of centriole duplication. Required to limit centriole duplication to once per cell cycle by preventing centriole reduplication. The sequence is that of Centrosomal protein of 76 kDa (CEP76) from Homo sapiens (Human).